A 217-amino-acid polypeptide reads, in one-letter code: Non-structural protein NS3 (217 aa).

It belongs to the orbivirus NS3 family.

In terms of biological role, may play a role in the release of virions from infected cells. This African horse sickness virus 9 (AHSV-9) protein is Non-structural protein NS3 (Segment-10).